Here is a 104-residue protein sequence, read N- to C-terminus: Pyrimidine/purine nucleoside phosphorylase (104 aa).

This sequence belongs to the nucleoside phosphorylase PpnP family.

It carries out the reaction a purine D-ribonucleoside + phosphate = a purine nucleobase + alpha-D-ribose 1-phosphate. The enzyme catalyses adenosine + phosphate = alpha-D-ribose 1-phosphate + adenine. The catalysed reaction is cytidine + phosphate = cytosine + alpha-D-ribose 1-phosphate. It catalyses the reaction guanosine + phosphate = alpha-D-ribose 1-phosphate + guanine. It carries out the reaction inosine + phosphate = alpha-D-ribose 1-phosphate + hypoxanthine. The enzyme catalyses thymidine + phosphate = 2-deoxy-alpha-D-ribose 1-phosphate + thymine. The catalysed reaction is uridine + phosphate = alpha-D-ribose 1-phosphate + uracil. It catalyses the reaction xanthosine + phosphate = alpha-D-ribose 1-phosphate + xanthine. Its function is as follows. Catalyzes the phosphorolysis of diverse nucleosides, yielding D-ribose 1-phosphate and the respective free bases. Can use uridine, adenosine, guanosine, cytidine, thymidine, inosine and xanthosine as substrates. Also catalyzes the reverse reactions. The protein is Pyrimidine/purine nucleoside phosphorylase of Geotalea uraniireducens (strain Rf4) (Geobacter uraniireducens).